A 535-amino-acid polypeptide reads, in one-letter code: T-complex protein 1 subunit beta (535 aa).

An N-acetylalanine modification is found at A2. S3 carries the phosphoserine modification. K13 bears the N6-acetyllysine mark. G44 provides a ligand contact to ADP. G44 lines the ATP pocket. D97 is a Mg(2+) binding site. ADP-binding residues include G98, T99, T100, S101, S168, and S169. Positions 98, 99, and 100 each coordinate ATP. K181 carries the post-translational modification N6-acetyllysine. A Glycyl lysine isopeptide (Lys-Gly) (interchain with G-Cter in SUMO2) cross-link involves residue K248. Phosphoserine is present on S260. A Phosphothreonine modification is found at T261. ADP is bound by residues G410, E495, and K500. E495 and K500 together coordinate ATP.

This sequence belongs to the TCP-1 chaperonin family. Component of the chaperonin-containing T-complex (TRiC), a hexadecamer composed of two identical back-to-back stacked rings enclosing a protein folding chamber. Each ring is made up of eight different subunits: TCP1/CCT1, CCT2, CCT3, CCT4, CCT5, CCT6A/CCT6, CCT7, CCT8. Interacts with PACRG. Interacts with FLCN. Interacts with DLEC1. Interacts with SVEP1. Post-translationally, the N-terminus is blocked.

It is found in the cytoplasm. The catalysed reaction is ATP + H2O = ADP + phosphate + H(+). Its function is as follows. Component of the chaperonin-containing T-complex (TRiC), a molecular chaperone complex that assists the folding of actin, tubulin and other proteins upon ATP hydrolysis. The TRiC complex mediates the folding of WRAP53/TCAB1, thereby regulating telomere maintenance. As part of the TRiC complex may play a role in the assembly of BBSome, a complex involved in ciliogenesis regulating transports vesicles to the cilia. The sequence is that of T-complex protein 1 subunit beta (Cct2) from Mus musculus (Mouse).